We begin with the raw amino-acid sequence, 319 residues long: Protein sprouty homolog 1 (319 aa).

At Met1 the chain carries N-acetylmethionine. Positions Thr54 to Gln157 are disordered. Residues Pro69 to Glu79 show a composition bias toward basic and acidic residues. Low complexity predominate over residues Ser112–Ser131. In terms of domain architecture, SPR spans Gln183–Cys295.

It belongs to the sprouty family. Forms heterodimers with SPRY2. Interacts with TESK1. Interacts with CAV1 (via C-terminus).

Its subcellular location is the cytoplasm. The protein localises to the membrane. Inhibits fibroblast growth factor (FGF)-induced retinal lens fiber differentiation, probably by inhibiting FGF-mediated phosphorylation of ERK1/2. Inhibits TGFB-induced epithelial-to-mesenchymal transition in lens epithelial cells. The polypeptide is Protein sprouty homolog 1 (SPRY1) (Bos taurus (Bovine)).